A 177-amino-acid chain; its full sequence is Probable DNA-directed RNA polymerase subunit delta (177 aa).

The region spanning 14-81 is the HTH HARE-type domain; the sequence is CSMIEVVHSV…GENRWGLRSW (68 aa). Positions 90–177 are disordered; it reads EILPQPKPKK…ETEEEEEEEL (88 aa). The segment covering 106–177 has biased composition (acidic residues); the sequence is DGFDDYIEED…ETEEEEEEEL (72 aa).

This sequence belongs to the RpoE family. In terms of assembly, RNAP is composed of a core of 2 alpha, a beta and a beta' subunits. The core is associated with a delta subunit and one of several sigma factors.

Functionally, participates in both the initiation and recycling phases of transcription. In the presence of the delta subunit, RNAP displays an increased specificity of transcription, a decreased affinity for nucleic acids, and an increased efficiency of RNA synthesis because of enhanced recycling. The sequence is that of Probable DNA-directed RNA polymerase subunit delta from Bacillus cereus (strain B4264).